Consider the following 60-residue polypeptide: Large ribosomal subunit protein bL32 (60 aa).

The interval 1–60 (MAVQQNKKSPSKRGMHRSHDFLVNPPTAIEPTTGESHLRHHISPNGFYRGRKILKTKADE) is disordered. The segment covering 49–60 (RGRKILKTKADE) has biased composition (basic residues).

This sequence belongs to the bacterial ribosomal protein bL32 family.

This Bordetella avium (strain 197N) protein is Large ribosomal subunit protein bL32.